We begin with the raw amino-acid sequence, 690 residues long: Serotransferrin (690 aa).

Residues 1–17 (MKPLLLLTLLGCLAAAL) form the signal peptide. 2 Transferrin-like domains span residues 24–329 (VKWC…SLKK) and 340–670 (IKWC…SLRK). The cysteines at positions 27 and 49 are disulfide-linked. 2 residues coordinate Fe(3+): D73 and Y103. Disulfide bonds link C126–C206, C171–C185, and C234–C248. Residues T128, K132, A134, and G135 each contribute to the hydrogencarbonate site. Residue Y200 coordinates Fe(3+). H256 provides a ligand contact to Fe(3+). Cystine bridges form between C343–C379 and C353–C370. Residues D394 and Y429 each coordinate Fe(3+). 7 disulfide bridges follow: C404–C682, C419–C643, C452–C530, C476–C671, C486–C499, C496–C513, and C570–C584. Hydrogencarbonate contacts are provided by T454, R458, A460, and G461. Residue Y524 coordinates Fe(3+). H592 serves as a coordination point for Fe(3+).

It belongs to the transferrin family. In terms of assembly, monomer.

The protein resides in the secreted. Its function is as follows. Transferrins are iron binding transport proteins which can bind two Fe(3+) ions in association with the binding of an anion, usually bicarbonate. The sequence is that of Serotransferrin (tf) from Oryzias latipes (Japanese rice fish).